The chain runs to 163 residues: Peptide deformylase (163 aa).

Fe cation is bound by residues C91 and H133. E134 is an active-site residue. H137 lines the Fe cation pocket.

Belongs to the polypeptide deformylase family. It depends on Fe(2+) as a cofactor.

It catalyses the reaction N-terminal N-formyl-L-methionyl-[peptide] + H2O = N-terminal L-methionyl-[peptide] + formate. Removes the formyl group from the N-terminal Met of newly synthesized proteins. Requires at least a dipeptide for an efficient rate of reaction. N-terminal L-methionine is a prerequisite for activity but the enzyme has broad specificity at other positions. The protein is Peptide deformylase of Lachnoclostridium phytofermentans (strain ATCC 700394 / DSM 18823 / ISDg) (Clostridium phytofermentans).